Here is a 651-residue protein sequence, read N- to C-terminus: DNA ligase (651 aa).

NAD(+)-binding positions include 32 to 36 (DAEYD), 75 to 76 (SL), and glutamate 106. Lysine 108 (N6-AMP-lysine intermediate) is an active-site residue. NAD(+) is bound by residues arginine 129, glutamate 164, lysine 271, and lysine 295. Residues cysteine 389, cysteine 392, cysteine 405, and cysteine 411 each coordinate Zn(2+). Residues 575–651 (SSDSFLNNKI…LDEEQWNRLC (77 aa)) form the BRCT domain.

It belongs to the NAD-dependent DNA ligase family. LigA subfamily. It depends on Mg(2+) as a cofactor. The cofactor is Mn(2+).

The catalysed reaction is NAD(+) + (deoxyribonucleotide)n-3'-hydroxyl + 5'-phospho-(deoxyribonucleotide)m = (deoxyribonucleotide)n+m + AMP + beta-nicotinamide D-nucleotide.. Functionally, DNA ligase that catalyzes the formation of phosphodiester linkages between 5'-phosphoryl and 3'-hydroxyl groups in double-stranded DNA using NAD as a coenzyme and as the energy source for the reaction. It is essential for DNA replication and repair of damaged DNA. This Wolbachia pipientis subsp. Culex pipiens (strain wPip) protein is DNA ligase.